Here is a 537-residue protein sequence, read N- to C-terminus: 5,6-dihydroxyindole-2-carboxylic acid oxidase (537 aa).

Residues Met1–Ala24 form the signal peptide. Over Gln25 to Glu477 the chain is Lumenal, melanosome. 5 disulfide bridges follow: Cys30–Cys41, Cys42–Cys65, Cys56–Cys99, Cys101–Cys110, and Cys113–Cys122. Asn96 and Asn104 each carry an N-linked (GlcNAc...) asparagine glycan. An N-linked (GlcNAc...) asparagine glycan is attached at Asn181. Positions 192, 215, and 224 each coordinate Zn(2+). Disulfide bonds link Cys258-Cys261 and Cys290-Cys303. N-linked (GlcNAc...) asparagine glycans are attached at residues Asn304 and Asn350. 2 residues coordinate Zn(2+): His377 and His381. Asn385 carries an N-linked (GlcNAc...) asparagine glycan. His404 contacts Zn(2+). A helical transmembrane segment spans residues Ile478–Ile501. The Cytoplasmic segment spans residues Arg502–Val537.

This sequence belongs to the tyrosinase family. Monomer. Interacts with ATP7A. Interacts with SLC45A2. The cofactor is Cu(2+). Zn(2+) is required as a cofactor. Post-translationally, glycosylated.

It localises to the melanosome membrane. The enzyme catalyses 2 5,6-dihydroxyindole-2-carboxylate + O2 = 2 indole-5,6-quinone-2-carboxylate + 2 H2O. It participates in pigment biosynthesis; melanin biosynthesis. Its function is as follows. Plays a role in melanin biosynthesis. Catalyzes the oxidation of 5,6-dihydroxyindole-2-carboxylic acid (DHICA) into indole-5,6-quinone-2-carboxylic acid. May regulate or influence the type of melanin synthesized. Also to a lower extent, capable of hydroxylating tyrosine and producing melanin. In Bos taurus (Bovine), this protein is 5,6-dihydroxyindole-2-carboxylic acid oxidase (TYRP1).